The sequence spans 139 residues: Transcription antitermination protein NusB (139 aa).

The protein belongs to the NusB family.

Involved in transcription antitermination. Required for transcription of ribosomal RNA (rRNA) genes. Binds specifically to the boxA antiterminator sequence of the ribosomal RNA (rrn) operons. This chain is Transcription antitermination protein NusB, found in Sodalis glossinidius (strain morsitans).